The sequence spans 450 residues: Phosphoglucosamine mutase (450 aa).

The Phosphoserine intermediate role is filled by serine 101. Mg(2+) contacts are provided by serine 101, aspartate 240, aspartate 242, and aspartate 244. Position 101 is a phosphoserine (serine 101).

Belongs to the phosphohexose mutase family. Requires Mg(2+) as cofactor. In terms of processing, activated by phosphorylation.

It carries out the reaction alpha-D-glucosamine 1-phosphate = D-glucosamine 6-phosphate. Catalyzes the conversion of glucosamine-6-phosphate to glucosamine-1-phosphate. This Streptococcus pneumoniae serotype 19F (strain G54) protein is Phosphoglucosamine mutase.